Consider the following 263-residue polypeptide: Endonuclease 8 (263 aa).

Catalysis depends on Pro2, which acts as the Schiff-base intermediate with DNA. Catalysis depends on Glu3, which acts as the Proton donor. The active-site Proton donor; for beta-elimination activity is the Lys53. DNA is bound by residues Gln70, Arg125, and Asn169. The FPG-type zinc finger occupies 229 to 263; sequence KVFHRDGEVCERCGGIIEKTTLSSRPFYWCPHCQK. The Proton donor; for delta-elimination activity role is filled by Arg253.

This sequence belongs to the FPG family. Zn(2+) serves as cofactor.

The catalysed reaction is 2'-deoxyribonucleotide-(2'-deoxyribose 5'-phosphate)-2'-deoxyribonucleotide-DNA = a 3'-end 2'-deoxyribonucleotide-(2,3-dehydro-2,3-deoxyribose 5'-phosphate)-DNA + a 5'-end 5'-phospho-2'-deoxyribonucleoside-DNA + H(+). Involved in base excision repair of DNA damaged by oxidation or by mutagenic agents. Acts as a DNA glycosylase that recognizes and removes damaged bases. Has a preference for oxidized pyrimidines, such as thymine glycol, 5,6-dihydrouracil and 5,6-dihydrothymine. Has AP (apurinic/apyrimidinic) lyase activity and introduces nicks in the DNA strand. Cleaves the DNA backbone by beta-delta elimination to generate a single-strand break at the site of the removed base with both 3'- and 5'-phosphates. In Salmonella newport (strain SL254), this protein is Endonuclease 8.